The sequence spans 463 residues: Nitrogenase iron-molybdenum cofactor biosynthesis protein NifE (463 aa).

It belongs to the NifD/NifK/NifE/NifN family.

The protein operates within cofactor biosynthesis; Fe-Mo cofactor biosynthesis. Its function is as follows. This protein may play a role in the biosynthesis of the prosthetic group of nitrogenase (FeMo cofactor). The chain is Nitrogenase iron-molybdenum cofactor biosynthesis protein NifE (nifE2) from Methanosarcina barkeri.